The following is a 375-amino-acid chain: Dual-specificity RNA methyltransferase RlmN (375 aa).

Glu-94 acts as the Proton acceptor in catalysis. The Radical SAM core domain maps to Glu-100–Asp-339. Residues Cys-107 and Cys-344 are joined by a disulfide bond. Cys-114, Cys-118, and Cys-121 together coordinate [4Fe-4S] cluster. S-adenosyl-L-methionine contacts are provided by residues Gly-168–Glu-169, Ser-200, Ser-222–His-224, and Asn-301. Cys-344 acts as the S-methylcysteine intermediate in catalysis.

The protein belongs to the radical SAM superfamily. RlmN family. [4Fe-4S] cluster serves as cofactor.

It localises to the cytoplasm. The catalysed reaction is adenosine(2503) in 23S rRNA + 2 reduced [2Fe-2S]-[ferredoxin] + 2 S-adenosyl-L-methionine = 2-methyladenosine(2503) in 23S rRNA + 5'-deoxyadenosine + L-methionine + 2 oxidized [2Fe-2S]-[ferredoxin] + S-adenosyl-L-homocysteine. It catalyses the reaction adenosine(37) in tRNA + 2 reduced [2Fe-2S]-[ferredoxin] + 2 S-adenosyl-L-methionine = 2-methyladenosine(37) in tRNA + 5'-deoxyadenosine + L-methionine + 2 oxidized [2Fe-2S]-[ferredoxin] + S-adenosyl-L-homocysteine. In terms of biological role, specifically methylates position 2 of adenine 2503 in 23S rRNA and position 2 of adenine 37 in tRNAs. m2A2503 modification seems to play a crucial role in the proofreading step occurring at the peptidyl transferase center and thus would serve to optimize ribosomal fidelity. The chain is Dual-specificity RNA methyltransferase RlmN from Vibrio campbellii (strain ATCC BAA-1116).